The chain runs to 585 residues: Proline--tRNA ligase (585 aa).

It belongs to the class-II aminoacyl-tRNA synthetase family. ProS type 1 subfamily. In terms of assembly, homodimer.

It is found in the cytoplasm. It catalyses the reaction tRNA(Pro) + L-proline + ATP = L-prolyl-tRNA(Pro) + AMP + diphosphate. In terms of biological role, catalyzes the attachment of proline to tRNA(Pro) in a two-step reaction: proline is first activated by ATP to form Pro-AMP and then transferred to the acceptor end of tRNA(Pro). As ProRS can inadvertently accommodate and process non-cognate amino acids such as alanine and cysteine, to avoid such errors it has two additional distinct editing activities against alanine. One activity is designated as 'pretransfer' editing and involves the tRNA(Pro)-independent hydrolysis of activated Ala-AMP. The other activity is designated 'posttransfer' editing and involves deacylation of mischarged Ala-tRNA(Pro). The misacylated Cys-tRNA(Pro) is not edited by ProRS. This chain is Proline--tRNA ligase, found in Acidobacterium capsulatum (strain ATCC 51196 / DSM 11244 / BCRC 80197 / JCM 7670 / NBRC 15755 / NCIMB 13165 / 161).